The primary structure comprises 341 residues: MIKEAIGSLVLGKSLTLEQSASVMDEIMEGKTTPAQIGAFLTALRVKGETAEEIAGLANVMRAKSTRISTSTPVLDIVGIGGDGINTFNISTTAAFVISGAGIKVAKHGNRAASSMCGSADVLEALGIKIDLNAEQVKICIEQIGIGFMFAPVFHPAMKFVAPSRREIGIRTVFNILGPLTNPASAQYQLIGVPEIGLGDKIISALCHMDIKHALVVHGLDGMDEMSISGDSVIWELKDKEIIKFRHTVSPREMGLEQVSLQAVKGGAAEENALTLRAILSGAKGPKRDVVLLNAAAALMVADKIDTIAEGISLAAEIIDNGLALNKLESLIKLSQSLASG.

Residues G79, 82-83 (GD), T87, 89-92 (NIST), 107-115 (KHGNRAASS), and S119 each bind 5-phospho-alpha-D-ribose 1-diphosphate. G79 is a binding site for anthranilate. Residue S91 coordinates Mg(2+). N110 contacts anthranilate. R165 contacts anthranilate. Mg(2+) contacts are provided by D224 and E225.

The protein belongs to the anthranilate phosphoribosyltransferase family. Homodimer. Mg(2+) serves as cofactor.

It catalyses the reaction N-(5-phospho-beta-D-ribosyl)anthranilate + diphosphate = 5-phospho-alpha-D-ribose 1-diphosphate + anthranilate. The protein operates within amino-acid biosynthesis; L-tryptophan biosynthesis; L-tryptophan from chorismate: step 2/5. In terms of biological role, catalyzes the transfer of the phosphoribosyl group of 5-phosphorylribose-1-pyrophosphate (PRPP) to anthranilate to yield N-(5'-phosphoribosyl)-anthranilate (PRA). The sequence is that of Anthranilate phosphoribosyltransferase from Dehalococcoides mccartyi (strain ATCC BAA-2266 / KCTC 15142 / 195) (Dehalococcoides ethenogenes (strain 195)).